The primary structure comprises 912 residues: Brevican core protein (912 aa).

Positions methionine 1–alanine 22 are cleaved as a signal peptide. An Ig-like V-type domain is found at arginine 36–lysine 155. Disulfide bonds link cysteine 57–cysteine 137, cysteine 179–cysteine 250, cysteine 203–cysteine 224, cysteine 277–cysteine 352, and cysteine 301–cysteine 322. Residue asparagine 130 is glycosylated (N-linked (GlcNAc...) asparagine). 2 Link domains span residues valine 157–alanine 252 and glycine 257–arginine 354. A glycan (N-linked (GlcNAc...) asparagine) is linked at asparagine 337. Disordered regions lie at residues isoleucine 408–alanine 427 and serine 438–cysteine 651. Position 418 is a phosphoserine (serine 418). An O-linked (Xyl...) (chondroitin sulfate) serine glycan is attached at serine 418. The segment covering glutamate 448–glutamate 463 has biased composition (basic and acidic residues). The segment covering glutamate 464 to alanine 478 has biased composition (acidic residues). Residues valine 520–leucine 537 show a composition bias toward pro residues. Residues glycine 603–arginine 617 show a composition bias toward basic and acidic residues. The region spanning serine 647–aspartate 683 is the EGF-like domain. 8 cysteine pairs are disulfide-bonded: cysteine 651/cysteine 662, cysteine 656/cysteine 671, cysteine 673/cysteine 682, cysteine 689/cysteine 700, cysteine 717/cysteine 809, cysteine 785/cysteine 801, cysteine 816/cysteine 859, and cysteine 845/cysteine 872. The region spanning aspartate 683–methionine 811 is the C-type lectin domain. In terms of domain architecture, Sushi spans valine 814–proline 874.

It belongs to the aggrecan/versican proteoglycan family. In terms of assembly, interacts with TNR. O-glycosylated; contains chondroitin sulfate. As to expression, brain; expressed in cerebellar astrocytes but not in neurons.

It is found in the secreted. The protein localises to the extracellular space. Its subcellular location is the extracellular matrix. Functionally, may play a role in the terminally differentiating and the adult nervous system during postnatal development. Could stabilize interactions between hyaluronan (HA) and brain proteoglycans. The sequence is that of Brevican core protein (BCAN) from Bos taurus (Bovine).